A 645-amino-acid polypeptide reads, in one-letter code: 1,4-alpha-glucan branching enzyme GlgB (645 aa).

Asp-309 (nucleophile) is an active-site residue. The active-site Proton donor is Glu-352. The segment at 619–645 (VKTRKGSKKQDGSKTKVRSNVTSRGKR) is disordered. Positions 636 to 645 (RSNVTSRGKR) are enriched in polar residues.

The protein belongs to the glycosyl hydrolase 13 family. GlgB subfamily. In terms of assembly, monomer.

It carries out the reaction Transfers a segment of a (1-&gt;4)-alpha-D-glucan chain to a primary hydroxy group in a similar glucan chain.. It participates in glycan biosynthesis; glycogen biosynthesis. Functionally, catalyzes the formation of the alpha-1,6-glucosidic linkages in glycogen by scission of a 1,4-alpha-linked oligosaccharide from growing alpha-1,4-glucan chains and the subsequent attachment of the oligosaccharide to the alpha-1,6 position. The polypeptide is 1,4-alpha-glucan branching enzyme GlgB (Bacillus anthracis (strain CDC 684 / NRRL 3495)).